Consider the following 181-residue polypeptide: MIQTSETAQRYARALFELAQDKGDLATIHKDFRAFAALIKTSADLRKLLDSPAFSRDVKVSALAEIAKKAGYSPLFGKFLGTMATNGRANDILGAEFAFDQFYAKQRGVQRAIVRTAKEMTGAEKSRIESLLARVVGGDVELTSEVDPSLIGGIQLRLGSKLVDASVAKKLERMNTVMKGA.

Belongs to the ATPase delta chain family. F-type ATPases have 2 components, F(1) - the catalytic core - and F(0) - the membrane proton channel. F(1) has five subunits: alpha(3), beta(3), gamma(1), delta(1), epsilon(1). F(0) has three main subunits: a(1), b(2) and c(10-14). The alpha and beta chains form an alternating ring which encloses part of the gamma chain. F(1) is attached to F(0) by a central stalk formed by the gamma and epsilon chains, while a peripheral stalk is formed by the delta and b chains.

It is found in the cell inner membrane. Its function is as follows. F(1)F(0) ATP synthase produces ATP from ADP in the presence of a proton or sodium gradient. F-type ATPases consist of two structural domains, F(1) containing the extramembraneous catalytic core and F(0) containing the membrane proton channel, linked together by a central stalk and a peripheral stalk. During catalysis, ATP synthesis in the catalytic domain of F(1) is coupled via a rotary mechanism of the central stalk subunits to proton translocation. In terms of biological role, this protein is part of the stalk that links CF(0) to CF(1). It either transmits conformational changes from CF(0) to CF(1) or is implicated in proton conduction. The protein is ATP synthase subunit delta of Hyphomonas neptunium (strain ATCC 15444).